Consider the following 149-residue polypeptide: Ribosomal RNA large subunit methyltransferase H (149 aa).

Residues Leu71, Gly98, and 117–122 each bind S-adenosyl-L-methionine; that span reads LSKLTL.

The protein belongs to the RNA methyltransferase RlmH family. In terms of assembly, homodimer.

It is found in the cytoplasm. It carries out the reaction pseudouridine(1915) in 23S rRNA + S-adenosyl-L-methionine = N(3)-methylpseudouridine(1915) in 23S rRNA + S-adenosyl-L-homocysteine + H(+). Its function is as follows. Specifically methylates the pseudouridine at position 1915 (m3Psi1915) in 23S rRNA. In Campylobacter jejuni subsp. jejuni serotype O:6 (strain 81116 / NCTC 11828), this protein is Ribosomal RNA large subunit methyltransferase H.